Here is a 355-residue protein sequence, read N- to C-terminus: Beta-ketoacyl-[acyl-carrier-protein] synthase III 1 (355 aa).

Residues Cys122 and His280 contribute to the active site. The segment at 281–285 is ACP-binding; sequence QANER. Residue Asn311 is part of the active site.

The protein belongs to the thiolase-like superfamily. FabH family. As to quaternary structure, homodimer.

It localises to the cytoplasm. It catalyses the reaction malonyl-[ACP] + acetyl-CoA + H(+) = 3-oxobutanoyl-[ACP] + CO2 + CoA. Its pathway is lipid metabolism; fatty acid biosynthesis. Functionally, catalyzes the condensation reaction of fatty acid synthesis by the addition to an acyl acceptor of two carbons from malonyl-ACP. Catalyzes the first condensation reaction which initiates fatty acid synthesis and may therefore play a role in governing the total rate of fatty acid production. Possesses both acetoacetyl-ACP synthase and acetyl transacylase activities. Its substrate specificity determines the biosynthesis of branched-chain and/or straight-chain of fatty acids. The chain is Beta-ketoacyl-[acyl-carrier-protein] synthase III 1 from Streptomyces avermitilis (strain ATCC 31267 / DSM 46492 / JCM 5070 / NBRC 14893 / NCIMB 12804 / NRRL 8165 / MA-4680).